The chain runs to 196 residues: Nucleoid occlusion factor SlmA (196 aa).

In terms of domain architecture, HTH tetR-type spans 7–68; it reads TNRREEILQA…GLIEFIEDSI (62 aa). Residues 31–50 constitute a DNA-binding region (H-T-H motif); the sequence is TTAKLAAQVGVSEAALYRHF. Positions 115 to 142 form a coiled coil; the sequence is EQDRLQSRINQLFERIETQLRQVLRERK.

This sequence belongs to the nucleoid occlusion factor SlmA family. In terms of assembly, homodimer. Interacts with FtsZ.

It is found in the cytoplasm. The protein localises to the nucleoid. In terms of biological role, required for nucleoid occlusion (NO) phenomenon, which prevents Z-ring formation and cell division over the nucleoid. Acts as a DNA-associated cell division inhibitor that binds simultaneously chromosomal DNA and FtsZ, and disrupts the assembly of FtsZ polymers. SlmA-DNA-binding sequences (SBS) are dispersed on non-Ter regions of the chromosome, preventing FtsZ polymerization at these regions. In Photobacterium profundum (strain SS9), this protein is Nucleoid occlusion factor SlmA.